The chain runs to 355 residues: tRNA-specific 2-thiouridylase MnmA 1 (355 aa).

Residue 6–13 participates in ATP binding; it reads LLSGGVDS. The interaction with target base in tRNA stretch occupies residues 92–94; it reads NPD. The active-site Nucleophile is the cysteine 97. The cysteines at positions 97 and 192 are disulfide-linked. Glycine 120 is an ATP binding site. Positions 142–144 are interaction with tRNA; that stretch reads KDQ. Cysteine 192 functions as the Cysteine persulfide intermediate in the catalytic mechanism.

Belongs to the MnmA/TRMU family.

It is found in the cytoplasm. It carries out the reaction S-sulfanyl-L-cysteinyl-[protein] + uridine(34) in tRNA + AH2 + ATP = 2-thiouridine(34) in tRNA + L-cysteinyl-[protein] + A + AMP + diphosphate + H(+). Catalyzes the 2-thiolation of uridine at the wobble position (U34) of tRNA, leading to the formation of s(2)U34. In Bacteroides thetaiotaomicron (strain ATCC 29148 / DSM 2079 / JCM 5827 / CCUG 10774 / NCTC 10582 / VPI-5482 / E50), this protein is tRNA-specific 2-thiouridylase MnmA 1.